We begin with the raw amino-acid sequence, 361 residues long: MKTIIAAYSGVLRGTGSSLLSAVHDLPNIPWLSKSSVVRHLQIISVLQWVLSFLILGVACTAVLVYIFCTDLWLIAALYLTWMVLDWNTPYKGGRRSSWVRNWAVWRYFRDYFPIKLVKTHNLLPSRNYIFGYHPHGIMCLGAFCNFGTEATGVSKKFPGIKCHLATLAGNFRMPVLREYLMSGGICPVARDTIDYILSKNGTGNAVVIAVGGAAESLNCRPGKNTVTLKQRKGFVKVALQHGADLVPVYSFGENEAYKQVVFEEGSWGRWIQKKFQKYVGFAPCLFHGCSFFSSNSWGLVPYANPITTVVGEPITVPKIEQPTQKDVELYHAMYVTSLQRLFDKYKTKLGLHDSEMLEIV.

Over 1–42 (MKTIIAAYSGVLRGTGSSLLSAVHDLPNIPWLSKSSVVRHLQ) the chain is Cytoplasmic. A helical membrane pass occupies residues 43–61 (IISVLQWVLSFLILGVACT). Over 62 to 65 (AVLV) the chain is Lumenal. Residues 66-85 (YIFCTDLWLIAALYLTWMVL) traverse the membrane as a helical segment. The Cytoplasmic portion of the chain corresponds to 86–361 (DWNTPYKGGR…LHDSEMLEIV (276 aa)).

Belongs to the diacylglycerol acyltransferase family.

The protein resides in the endoplasmic reticulum membrane. It is found in the lipid droplet. The protein localises to the cytoplasm. It localises to the perinuclear region. It carries out the reaction an acyl-CoA + a 1,2-diacyl-sn-glycerol = a triacyl-sn-glycerol + CoA. The catalysed reaction is all-trans-retinol + an acyl-CoA = an all-trans-retinyl ester + CoA. The enzyme catalyses 2-(9Z-octadecenoyl)-glycerol + (9Z)-octadecenoyl-CoA = 1,2-di-(9Z-octadecenoyl)-sn-glycerol + CoA. It catalyses the reaction 1,2-di-(9Z-octadecenoyl)-sn-glycerol + (9Z)-octadecenoyl-CoA = 1,2,3-tri-(9Z-octadecenoyl)-glycerol + CoA. It carries out the reaction all-trans-retinol + hexadecanoyl-CoA = all-trans-retinyl hexadecanoate + CoA. The catalysed reaction is 1-O-(9Z-octadecenyl)-glycerol + (9Z)-octadecenoyl-CoA = 1-O-(9Z-octadecyl)-3-(9Z-octadecenoyl)-glycerol + CoA. The enzyme catalyses 1-(9Z-octadecenoyl)-glycerol + (9Z)-octadecenoyl-CoA = 1,2-di-(9Z-octadecenoyl)-glycerol + CoA. It catalyses the reaction 1,2-di-(9Z-octadecenoyl)-sn-glycerol + hexadecanoyl-CoA = 1,2-di-(9Z)-octadecenoyl-3-hexadecanoyl-sn-glycerol + CoA. It carries out the reaction 1,3-di-(9Z-octadecenoyl)-glycerol + (9Z)-octadecenoyl-CoA = 1,2,3-tri-(9Z-octadecenoyl)-glycerol + CoA. The catalysed reaction is 2,3-di-(9Z)-octadecenoyl-sn-glycerol + (9Z)-octadecenoyl-CoA = 1,2,3-tri-(9Z-octadecenoyl)-glycerol + CoA. The enzyme catalyses 2-(9Z-octadecenoyl)-glycerol + hexadecanoyl-CoA = 1-hexadecanoyl-2-(9Z-octadecenoyl)-sn-glycerol + CoA. It participates in glycerolipid metabolism; triacylglycerol biosynthesis. Its function is as follows. Essential acyltransferase that catalyzes the terminal and only committed step in triacylglycerol synthesis by using diacylglycerol and fatty acyl CoA as substrates. Required for synthesis and storage of intracellular triglycerides. Probably plays a central role in cytosolic lipid accumulation. The polypeptide is Diacylglycerol O-acyltransferase 2 (dgat2) (Xenopus tropicalis (Western clawed frog)).